Reading from the N-terminus, the 92-residue chain is YcgL domain-containing protein Shewana3_2381 (92 aa).

The YcgL domain occupies 1–85; it reads MLCAVYKSSR…PQVNLLAEHR (85 aa).

The polypeptide is YcgL domain-containing protein Shewana3_2381 (Shewanella sp. (strain ANA-3)).